The sequence spans 648 residues: Forkhead box protein N1 (648 aa).

The interval M1 to E105 is disordered. Residues E58–S67 show a composition bias toward pro residues. The fork-head DNA-binding region spans K271 to D367. 3 disordered regions span residues L392–G445, L458–E508, and L623–A648. The span at L462–P473 shows a compositional bias: pro residues.

Expressed in thymus.

The protein resides in the nucleus. Functionally, transcriptional regulator which regulates the development, differentiation, and function of thymic epithelial cells (TECs) both in the prenatal and postnatal thymus. Acts as a master regulator of the TECs lineage development and is required from the onset of differentiation in progenitor TECs in the developing fetus to the final differentiation steps through which TECs mature to acquire their full functionality. Regulates, either directly or indirectly the expression of a variety of genes that mediate diverse aspects of thymus development and function, including MHC Class II, DLL4, CCL25, CTSL, CD40 and PAX1. Regulates the differentiation of the immature TECs into functional cortical TECs (cTECs) and medullary TECs (mTECs). Essential for maintenance of mTECs population in the postnatal thymus. Involved in the morphogenesis and maintenance of the three-dimensional thymic microstructure which is necessary for a fully functional thymus. Plays an important role in the maintenance of hematopoiesis and particularly T lineage progenitors within the bone marrow niche with age. Essential for the vascularization of the thymus anlage. Promotes the terminal differentiation of epithelial cells in the epidermis and hair follicles, partly by negatively regulating the activity of protein kinase C. Plays a crucial role in the early prenatal stages of T-cell ontogeny. The chain is Forkhead box protein N1 (FOXN1) from Homo sapiens (Human).